Consider the following 288-residue polypeptide: 4-hydroxybenzoate octaprenyltransferase (288 aa).

The next 6 membrane-spanning stretches (helical) occupy residues 20 to 40 (IGTL…AGGL), 43 to 63 (LKVF…GCII), 96 to 116 (LFVV…PLVV), 210 to 230 (QIIG…GMVA), 234 to 254 (AIYA…QKLI), and 262 to 282 (CFTA…ALML).

Belongs to the UbiA prenyltransferase family. It depends on Mg(2+) as a cofactor.

It is found in the cell inner membrane. The catalysed reaction is all-trans-octaprenyl diphosphate + 4-hydroxybenzoate = 4-hydroxy-3-(all-trans-octaprenyl)benzoate + diphosphate. It functions in the pathway cofactor biosynthesis; ubiquinone biosynthesis. Functionally, catalyzes the prenylation of para-hydroxybenzoate (PHB) with an all-trans polyprenyl group. Mediates the second step in the final reaction sequence of ubiquinone-8 (UQ-8) biosynthesis, which is the condensation of the polyisoprenoid side chain with PHB, generating the first membrane-bound Q intermediate 3-octaprenyl-4-hydroxybenzoate. The sequence is that of 4-hydroxybenzoate octaprenyltransferase from Shewanella pealeana (strain ATCC 700345 / ANG-SQ1).